We begin with the raw amino-acid sequence, 340 residues long: Probable cyclic nucleotide phosphodiesterase PsycPRwf_0181 (340 aa).

The disordered stretch occupies residues 1–36 (MAPLPHSVSPRHTQVADNGRLSEPTDYHPPTEISTD). Residues Asp-47, His-49, Asp-128, Asn-158, His-237, His-276, and His-278 each contribute to the Fe cation site. Residues His-49, Asp-128, and 158–159 (NH) contribute to the AMP site. His-278 is an AMP binding site.

The protein belongs to the cyclic nucleotide phosphodiesterase class-III family. Requires Fe(2+) as cofactor.

The polypeptide is Probable cyclic nucleotide phosphodiesterase PsycPRwf_0181 (Psychrobacter sp. (strain PRwf-1)).